We begin with the raw amino-acid sequence, 215 residues long: Small ribosomal subunit protein uS7 (215 aa).

Belongs to the universal ribosomal protein uS7 family. In terms of assembly, part of the 30S ribosomal subunit.

In terms of biological role, one of the primary rRNA binding proteins, it binds directly to 16S rRNA where it nucleates assembly of the head domain of the 30S subunit. Is located at the subunit interface close to the decoding center. This is Small ribosomal subunit protein uS7 from Pyrococcus abyssi (strain GE5 / Orsay).